The following is a 300-amino-acid chain: MTSRRSVKSCPREAPRGTHEELYYGPVSPADPESPRDDFRRGAGPMRARPRGEVRFLHYDEAGYALYRDSSSDDDESRDTARPRRSASVAGSHGPGPARAPPPPGGPVGAGGRSHAPPARTPKMTRGAPKASATPATDPARGRRPAQADSAVLLDAPAPTASGRTKTPAQGLAKKLHFSTAPPSPTAPWTPRVAGFNKRVFCAAVGRLAATHARLAAVQLWDMSRPHTDEDLNELLDLTTIRVTVCEGKNLLQRANELVNPDAAQDVDATAAARGRPAGRAAATARAPARSASRPRRPLE.

The interval 1-148 is disordered; sequence MTSRRSVKSC…PARGRRPAQA (148 aa). 2 stretches are compositionally biased toward basic and acidic residues: residues 10–22 and 50–61; these read CPRE…HEEL and PRGEVRFLHYDE. The Nuclear localization signal signature appears at 163–166; that stretch reads GRTK. The interaction with gE stretch occupies residues 174-267; sequence KKLHFSTAPP…LVNPDAAQDV (94 aa). The short motif at 232–244 is the Nuclear export signal element; sequence LNELLDLTTIRVT. Low complexity predominate over residues 269–292; it reads ATAAARGRPAGRAAATARAPARSA. The interval 269 to 300 is disordered; sequence ATAAARGRPAGRAAATARAPARSASRPRRPLE.

This sequence belongs to the alphaherpesvirinae VP22 tegument protein family. In terms of assembly, interacts with gE (via C-terminus); this interaction is necessary for the recruitment of VP22 to the Golgi and its packaging into virions. Interacts with gM (via C-terminus). Interacts with VP16; this interaction allows the formation of a tripartite complex composed of VP16, VP22 and UL41/VHS. Interacts with the capsid-binding protein UL16. Interacts with host CGAS. Post-translationally, highly phosphorylated in the host cell. Packaging is selective for underphosphorylated forms.

Its subcellular location is the virion tegument. It is found in the host cytoplasm. The protein localises to the host nucleus. The protein resides in the host Golgi apparatus. In terms of biological role, tegument protein that plays different roles during the time course of infection. Participates in both the accumulation of viral mRNAs and viral protein translation at late time of infection. Modulates the RNase activity of the virion host shutoff protein UL41 probably to ensure necessary levels of key cellular mRNAs and proteins. Plays a role in microtubule reorganization that occurs after viral infection by stabilizing microtubule network. Plays a role in the inhibition of host innate immune system by targeting the CGAS enzymatic activity which is the principal cytosolic DNA sensor that detects invading viral DNA. Acts by mediating disruption of liquid-like droplets in which CGAS is activated, thereby preventing CGAS activity. The chain is Tegument protein VP22 from Homo sapiens (Human).